The chain runs to 478 residues: Major facilitator superfamily domain-containing protein 12 (478 aa).

M1 is subject to N-acetylmethionine. Over 1–26 (MVPGSPAAGAGPAPRALSLAARLSYA) the chain is Cytoplasmic. The chain crosses the membrane as a helical span at residues 27-47 (VGHFLNDLCASMWFTYLLLYL). Topologically, residues 48–56 (HSVRAYSSR) are lumenal. A helical membrane pass occupies residues 57-77 (GAGLLLLLGQVADGLCTPLVG). Over 78 to 97 (YEADRAAGRCARCGPRKAWH) the chain is Cytoplasmic. The helical transmembrane segment at 98–118 (LVGTVCVLLSFPFIFSPCLGC) threads the bilayer. Residues 119-124 (GAATPE) are Lumenal-facing. The helical transmembrane segment at 125-145 (WAALLYYGPFIVVFQFGWAAT) threads the bilayer. The Cytoplasmic portion of the chain corresponds to 146–168 (QIAHLSLIPELVTSDHEKVELTA). A helical membrane pass occupies residues 169–189 (LRYAFTVVANITVFGAAWLLL). The Lumenal segment spans residues 190 to 216 (RLQGSAREGPPDEAGDHLGVQDVPVFR). A helical transmembrane segment spans residues 217–237 (TLSLCVVGVGAVFSLLFHLGT). The Cytoplasmic portion of the chain corresponds to 238–277 (RERRRPPAQEPDERSPLLAPATARPLLLWKHWLREPSFYQ). A helical transmembrane segment spans residues 278-300 (VGLLYMSTRLIVNLSQTYIAMYL). At 301–308 (TYSLNLPK) the chain is on the lumenal side. The chain crosses the membrane as a helical span at residues 309-329 (KFIATIPLVMYVSGFCSSFLM). At 330-338 (KPVNKCIGR) the chain is on the cytoplasmic side. A helical membrane pass occupies residues 339–359 (NMTYFVGLLVILAFAAWVVLV). The Lumenal portion of the chain corresponds to 360-361 (DE). Residues 362–382 (LGMAVYVAAVLLGGGCATILV) form a helical membrane-spanning segment. The Cytoplasmic segment spans residues 383–400 (TSLAMTADLIGPHTHSGA). The helical transmembrane segment at 401–421 (FVYGAMSFSDKVANGLAVMVI) threads the bilayer. At 422-436 (QSLHPCSLELCCRAC) the chain is on the lumenal side. A helical membrane pass occupies residues 437–457 (VGFYHWVMVAVTGGVGVAATL). Over 458-478 (SLCSLLVWPIRLRSWDPGAQP) the chain is Cytoplasmic.

The protein belongs to the major facilitator superfamily.

It localises to the melanosome membrane. The protein resides in the lysosome membrane. The catalysed reaction is L-cysteine(in) = L-cysteine(out). Its function is as follows. Transporter that mediates the import of cysteine into melanosomes, thereby regulating skin/hair pigmentation. In melanosomes, cysteine import is required both for normal levels of cystine, the oxidized dimer of cysteine, and provide cysteine for the production of the cysteinyldopas used in pheomelanin synthesis, thereby regulating skin/hair pigmentation. Also catalyzes import of cysteine into lysosomes in non-pigmented cells, regulating lysosomal cystine and cysteine storage, which is essnetial for redox homeostasis. This Equus caballus (Horse) protein is Major facilitator superfamily domain-containing protein 12.